A 260-amino-acid polypeptide reads, in one-letter code: Resolvase (260 aa).

One can recognise a Tyr recombinase domain in the interval 38-241; that stretch reads ELPKYLLAPE…FALDVAARHR (204 aa). Active-site residues include Arg73, Lys105, His193, Arg196, and His219. Tyr228 acts as the O-(3'-phospho-DNA)-tyrosine intermediate in catalysis.

Belongs to the 'phage' integrase family.

In terms of biological role, this resolvase acts at the RfsF equivalent resolution sequence of pColBM-CL139. This Escherichia coli protein is Resolvase (resD).